A 245-amino-acid polypeptide reads, in one-letter code: MNTELQPKLEKSAVNFQAKPRKQKIRKDPNAPFIREKLELPDGHNKLLLHSCCAPCSGEVMEAILASGIEFTIYFYNPNIHPLKEYLIRKEENIRFAKKFGIPFIDADYDRQNWFDRAKGMEWEPERGIRCTMCFDMRFEKAAEYAHKHGFPVFTSCLGISRWKDMNQINGCGHRAAEKYDDVIYWDYNWRKEGGSQRMIEISKRERFYQQEYCGCVYSLRDSNKWREETGRQKIEIGKLYYSAD.

Residues cysteine 52, cysteine 53, cysteine 131, and cysteine 134 each coordinate [4Fe-4S] cluster. Cysteines 214 and 216 form a disulfide.

This sequence belongs to the QueH family.

The catalysed reaction is epoxyqueuosine(34) in tRNA + AH2 = queuosine(34) in tRNA + A + H2O. The protein operates within tRNA modification; tRNA-queuosine biosynthesis. Its function is as follows. Catalyzes the conversion of epoxyqueuosine (oQ) to queuosine (Q), which is a hypermodified base found in the wobble positions of tRNA(Asp), tRNA(Asn), tRNA(His) and tRNA(Tyr). This Haemophilus influenzae (strain ATCC 51907 / DSM 11121 / KW20 / Rd) protein is Epoxyqueuosine reductase QueH.